A 267-amino-acid chain; its full sequence is Undecaprenyl-diphosphatase (267 aa).

7 helical membrane passes run 1–21, 40–60, 85–105, 111–131, 190–210, 219–239, and 245–265; these read MSLF…FLPV, GQVI…LYFW, LAMG…ALHF, ALRS…LLWW, MLMS…DVAV, DGAI…SLMM, and VSFT…LGIA.

The protein belongs to the UppP family.

The protein localises to the cell inner membrane. The catalysed reaction is di-trans,octa-cis-undecaprenyl diphosphate + H2O = di-trans,octa-cis-undecaprenyl phosphate + phosphate + H(+). In terms of biological role, catalyzes the dephosphorylation of undecaprenyl diphosphate (UPP). Confers resistance to bacitracin. The polypeptide is Undecaprenyl-diphosphatase (Ruegeria pomeroyi (strain ATCC 700808 / DSM 15171 / DSS-3) (Silicibacter pomeroyi)).